Here is a 291-residue protein sequence, read N- to C-terminus: ATP phosphoribosyltransferase (291 aa).

This sequence belongs to the ATP phosphoribosyltransferase family. Long subfamily. The cofactor is Mg(2+).

It localises to the cytoplasm. It catalyses the reaction 1-(5-phospho-beta-D-ribosyl)-ATP + diphosphate = 5-phospho-alpha-D-ribose 1-diphosphate + ATP. Its pathway is amino-acid biosynthesis; L-histidine biosynthesis; L-histidine from 5-phospho-alpha-D-ribose 1-diphosphate: step 1/9. Feedback inhibited by histidine. Functionally, catalyzes the condensation of ATP and 5-phosphoribose 1-diphosphate to form N'-(5'-phosphoribosyl)-ATP (PR-ATP). Has a crucial role in the pathway because the rate of histidine biosynthesis seems to be controlled primarily by regulation of HisG enzymatic activity. The chain is ATP phosphoribosyltransferase from Desulfosudis oleivorans (strain DSM 6200 / JCM 39069 / Hxd3) (Desulfococcus oleovorans).